The following is a 982-amino-acid chain: Pentatricopeptide repeat-containing protein At5g62370 (982 aa).

PPR repeat units lie at residues 94-129, 130-164, 165-199, 200-234, 236-270, 271-305, 306-340, 341-376, 377-411, 412-446, 476-510, 511-545, 546-580, 581-615, 616-650, 651-685, 686-720, 721-755, 759-789, 793-827, 828-858, 860-894, 895-929, and 930-964; these read DSSC…GIVP, DSSV…GYAP, SRNS…GSGL, WLWC…TRMP, PVNL…GYYV, DKVM…SFEL, DPCI…GVQS, NVFT…DISR, NVHC…GIVP, DHIT…GCGI, AAVG…GCTP, LPFS…DFVP, DVDT…GLRP, TVAI…GIQP, DEIA…FLRP, SSFT…GLSP, NVVL…DIKH, DHIA…KLLQ, RTKP…VKKS, NLYL…GIVP, NLVT…TNCE, DQVM…GINP, NKDS…DIWP, and RSIN…GRSL.

It belongs to the PPR family. P subfamily.

The chain is Pentatricopeptide repeat-containing protein At5g62370 from Arabidopsis thaliana (Mouse-ear cress).